The primary structure comprises 309 residues: Solute carrier family 25 member 48 (309 aa).

Solcar repeat units follow at residues 3–86, 99–209, and 218–305; these read VFQL…TQRL, CSML…FCNW, and PPPC…SLQF. The next 6 membrane-spanning stretches (helical) occupy residues 9 to 29, 61 to 81, 105 to 125, 186 to 206, 218 to 238, and 281 to 299; these read FLAGWIGGASSVIVGHPLDTV, GLSFPLASITLYNSMVFGFFS, TVASMLTGLVSVGVGAPVDLV, GAMILRDIPGYALYFIPYTLF, PPPCCIWLAGGLAGSISWVTA, and ATVNAIRGFPMCATMFLGY.

It belongs to the mitochondrial carrier (TC 2.A.29) family.

It localises to the mitochondrion inner membrane. In Danio rerio (Zebrafish), this protein is Solute carrier family 25 member 48 (slc25a48).